The primary structure comprises 299 residues: Phosphoribosylaminoimidazole-succinocarboxamide synthase (299 aa).

It belongs to the SAICAR synthetase family.

The enzyme catalyses 5-amino-1-(5-phospho-D-ribosyl)imidazole-4-carboxylate + L-aspartate + ATP = (2S)-2-[5-amino-1-(5-phospho-beta-D-ribosyl)imidazole-4-carboxamido]succinate + ADP + phosphate + 2 H(+). It participates in purine metabolism; IMP biosynthesis via de novo pathway; 5-amino-1-(5-phospho-D-ribosyl)imidazole-4-carboxamide from 5-amino-1-(5-phospho-D-ribosyl)imidazole-4-carboxylate: step 1/2. This Leifsonia xyli subsp. xyli (strain CTCB07) protein is Phosphoribosylaminoimidazole-succinocarboxamide synthase.